The sequence spans 210 residues: ATP-dependent dethiobiotin synthetase BioD (210 aa).

Position 13-18 (13-18 (GIGKTV)) interacts with ATP. Residue Thr-17 participates in Mg(2+) binding. The active site involves Lys-33. Glu-101 contributes to the Mg(2+) binding site. ATP is bound by residues 101–104 (EGAG) and 185–187 (PWL).

It belongs to the dethiobiotin synthetase family. Homodimer. The cofactor is Mg(2+).

It localises to the cytoplasm. It carries out the reaction (7R,8S)-7,8-diammoniononanoate + CO2 + ATP = (4R,5S)-dethiobiotin + ADP + phosphate + 3 H(+). It participates in cofactor biosynthesis; biotin biosynthesis; biotin from 7,8-diaminononanoate: step 1/2. Catalyzes a mechanistically unusual reaction, the ATP-dependent insertion of CO2 between the N7 and N8 nitrogen atoms of 7,8-diaminopelargonic acid (DAPA, also called 7,8-diammoniononanoate) to form a ureido ring. This is ATP-dependent dethiobiotin synthetase BioD from Bradyrhizobium sp. (strain BTAi1 / ATCC BAA-1182).